The primary structure comprises 298 residues: Syntaxin-125 (298 aa).

The residue at position 1 (methionine 1) is an N-acetylmethionine. The Cytoplasmic portion of the chain corresponds to 1–274; it reads MNDLFSNSFK…KSSRKWTCYA (274 aa). A coiled-coil region spans residues 25–155; that stretch reads TMNLDKFFED…NEYKETVERR (131 aa). A t-SNARE coiled-coil homology domain is found at 198–260; it reads ISEIQERHDA…RRGTDQLQDA (63 aa). The chain crosses the membrane as a helical; Anchor for type IV membrane protein span at residues 275–295; that stretch reads IILFIVIFILLLIPLLPHIML. At 296-298 the chain is on the vesicular side; that stretch reads MLK.

The protein belongs to the syntaxin family. In terms of assembly, part of the t-SNARE complex.

It localises to the membrane. Its function is as follows. Vesicle trafficking protein that functions in the secretory pathway. This is Syntaxin-125 (SYP125) from Arabidopsis thaliana (Mouse-ear cress).